The sequence spans 348 residues: Phenylalanine--tRNA ligase alpha subunit (348 aa).

Position 259 (Glu259) interacts with Mg(2+).

Belongs to the class-II aminoacyl-tRNA synthetase family. Phe-tRNA synthetase alpha subunit type 1 subfamily. In terms of assembly, tetramer of two alpha and two beta subunits. It depends on Mg(2+) as a cofactor.

It localises to the cytoplasm. The catalysed reaction is tRNA(Phe) + L-phenylalanine + ATP = L-phenylalanyl-tRNA(Phe) + AMP + diphosphate + H(+). This Lactiplantibacillus plantarum (strain ATCC BAA-793 / NCIMB 8826 / WCFS1) (Lactobacillus plantarum) protein is Phenylalanine--tRNA ligase alpha subunit.